We begin with the raw amino-acid sequence, 809 residues long: Spindle pole body component alp14 (809 aa).

HEAT repeat units follow at residues 127 to 164 and 167 to 204; these read DSAAPVIESIIPSLSARSPKVIASNVAAIASLVEQFGA and IPSKMIIPHISNLFGHADKNVRKEASRLTVNIYRWTGD. Disordered stretches follow at residues 233–274, 507–608, and 619–638; these read PPKQ…SDDQ, AKAP…SGAL, and ELDDPAPQPAKHSRVDRYEH. Residues 239–253 show a composition bias toward polar residues; that stretch reads FLKSQQPTSEPNVET. Over residues 262–274 the composition is skewed to acidic residues; that stretch reads ENEESEPEPSDDQ. Residues 509–518 show a composition bias toward basic residues; sequence APTKKSKVKP. 2 stretches are compositionally biased toward low complexity: residues 526–551 and 582–595; these read VVVPSNAKAVKKSVVPSSPVVPSPRK and SRGLSRGTSSSLQQ. Residues Ser543 and Ser548 each carry the phosphoserine modification. Residues 597-608 are compositionally biased toward polar residues; that stretch reads VKASTPLNSGAL. A coiled-coil region spans residues 637-697; the sequence is EHPKVLEDND…NTLRSARKAS (61 aa). Residues Ser697 and Ser720 each carry the phosphoserine modification.

This sequence belongs to the TOG/XMAP215 family. In terms of assembly, interacts with alp14.

It localises to the cytoplasm. It is found in the cytoskeleton. The protein resides in the microtubule organizing center. Its subcellular location is the spindle pole body. The protein localises to the chromosome. It localises to the centromere. It is found in the kinetochore. Required for bipolar spindle formation and proper chromosome segregation. Has a role in connecting the kinetochores and the plus end of pole to chromosome microtubules. Also required for the activation of the spindle checkpoint pathway. The polypeptide is Spindle pole body component alp14 (alp14) (Schizosaccharomyces pombe (strain 972 / ATCC 24843) (Fission yeast)).